We begin with the raw amino-acid sequence, 336 residues long: UDP-N-acetylglucosamine--N-acetylmuramyl-(pentapeptide) pyrophosphoryl-undecaprenol N-acetylglucosamine transferase (336 aa).

4 residues coordinate UDP-N-acetyl-alpha-D-glucosamine: N102, R144, S172, and Q264.

This sequence belongs to the glycosyltransferase 28 family. MurG subfamily.

The protein localises to the cell membrane. The enzyme catalyses di-trans,octa-cis-undecaprenyl diphospho-N-acetyl-alpha-D-muramoyl-L-alanyl-D-glutamyl-meso-2,6-diaminopimeloyl-D-alanyl-D-alanine + UDP-N-acetyl-alpha-D-glucosamine = di-trans,octa-cis-undecaprenyl diphospho-[N-acetyl-alpha-D-glucosaminyl-(1-&gt;4)]-N-acetyl-alpha-D-muramoyl-L-alanyl-D-glutamyl-meso-2,6-diaminopimeloyl-D-alanyl-D-alanine + UDP + H(+). It participates in cell wall biogenesis; peptidoglycan biosynthesis. Cell wall formation. Catalyzes the transfer of a GlcNAc subunit on undecaprenyl-pyrophosphoryl-MurNAc-pentapeptide (lipid intermediate I) to form undecaprenyl-pyrophosphoryl-MurNAc-(pentapeptide)GlcNAc (lipid intermediate II). This chain is UDP-N-acetylglucosamine--N-acetylmuramyl-(pentapeptide) pyrophosphoryl-undecaprenol N-acetylglucosamine transferase, found in Rubrobacter xylanophilus (strain DSM 9941 / JCM 11954 / NBRC 16129 / PRD-1).